The primary structure comprises 108 residues: Transmembrane protein 265 (108 aa).

Transmembrane regions (helical) follow at residues 34-54 (AATS…VFAI) and 78-98 (LILA…LLLW).

It belongs to the CD225/Dispanin family.

It localises to the membrane. The sequence is that of Transmembrane protein 265 from Homo sapiens (Human).